Reading from the N-terminus, the 94-residue chain is Small ribosomal subunit protein uS19 (94 aa).

It belongs to the universal ribosomal protein uS19 family.

Protein S19 forms a complex with S13 that binds strongly to the 16S ribosomal RNA. The protein is Small ribosomal subunit protein uS19 of Moorella thermoacetica (strain ATCC 39073 / JCM 9320).